Reading from the N-terminus, the 297-residue chain is Ribosomal RNA small subunit methyltransferase H (297 aa).

S-adenosyl-L-methionine is bound by residues G36–H38, D56, L90, D104, and H111.

This sequence belongs to the methyltransferase superfamily. RsmH family.

The protein localises to the cytoplasm. The catalysed reaction is cytidine(1402) in 16S rRNA + S-adenosyl-L-methionine = N(4)-methylcytidine(1402) in 16S rRNA + S-adenosyl-L-homocysteine + H(+). Functionally, specifically methylates the N4 position of cytidine in position 1402 (C1402) of 16S rRNA. The protein is Ribosomal RNA small subunit methyltransferase H of Dictyoglomus thermophilum (strain ATCC 35947 / DSM 3960 / H-6-12).